The primary structure comprises 500 residues: DNA polymerase processivity factor (500 aa).

Residues 388–500 form a disordered region; it reads VSESDDAAAE…QEPANKRGKR (113 aa). Positions 438–449 are enriched in polar residues; it reads TLQQSAQPSSPA.

It belongs to the herpesviridae DNA polymerase processivity factor family. As to quaternary structure, interacts with the DNA polymerase catalytic subunit UL30. Interacts with the origin-binding protein.

It is found in the host nucleus. Functionally, plays an essential role in viral DNA replication by acting as the polymerase accessory subunit. Associates with the viral polymerase to increase its processivity and forms high-affinity direct interactions with DNA. Facilitates the origin-binding protein UL9 loading onto DNA thus increasing its ability to assemble into a functional complex capable of unwinding duplex DNA. The polypeptide is DNA polymerase processivity factor (UL42) (Amazona oratrix (yellow-headed parrot)).